Consider the following 562-residue polypeptide: Oligo-1,6-glucosidase (562 aa).

Positions 21, 23, 25, and 29 each coordinate Ca(2+). Asp-199 functions as the Nucleophile in the catalytic mechanism. Catalysis depends on Glu-256, which acts as the Proton donor.

This sequence belongs to the glycosyl hydrolase 13 family.

It localises to the cytoplasm. The catalysed reaction is Hydrolysis of (1-&gt;6)-alpha-D-glucosidic linkages in some oligosaccharides produced from starch and glycogen by alpha-amylase, and in isomaltose.. This is Oligo-1,6-glucosidase (malL) from Parageobacillus thermoglucosidasius (Geobacillus thermoglucosidasius).